A 277-amino-acid polypeptide reads, in one-letter code: Small ribosomal subunit protein uS2 (277 aa).

Positions 226-277 (GQQARADRGEDLGAAVEPVAEPALVEEAAAPVTEDEQVPAEAAAETERQSDA) are disordered. Residues 239 to 257 (AAVEPVAEPALVEEAAAPV) are compositionally biased toward low complexity.

It belongs to the universal ribosomal protein uS2 family.

The protein is Small ribosomal subunit protein uS2 of Sphingopyxis alaskensis (strain DSM 13593 / LMG 18877 / RB2256) (Sphingomonas alaskensis).